Reading from the N-terminus, the 87-residue chain is Cytochrome c6 (87 aa).

Residues cysteine 14, cysteine 17, histidine 18, and methionine 58 each contribute to the heme c site.

Belongs to the cytochrome c family. PetJ subfamily. Monomer. In terms of processing, binds 1 heme c group covalently per subunit.

Its subcellular location is the cellular thylakoid lumen. Functionally, functions as an electron carrier between membrane-bound cytochrome b6-f and photosystem I in oxygenic photosynthesis. The sequence is that of Cytochrome c6 (petJ) from Parathermosynechococcus lividus (Thermostichus lividus).